The chain runs to 231 residues: Demethylmenaquinone methyltransferase (231 aa).

S-adenosyl-L-methionine contacts are provided by residues T62, D80, 100-101, and S117; that span reads DA.

Belongs to the class I-like SAM-binding methyltransferase superfamily. MenG/UbiE family.

It catalyses the reaction a 2-demethylmenaquinol + S-adenosyl-L-methionine = a menaquinol + S-adenosyl-L-homocysteine + H(+). It functions in the pathway quinol/quinone metabolism; menaquinone biosynthesis; menaquinol from 1,4-dihydroxy-2-naphthoate: step 2/2. Functionally, methyltransferase required for the conversion of demethylmenaquinol (DMKH2) to menaquinol (MKH2). The sequence is that of Demethylmenaquinone methyltransferase from Mycobacterium marinum (strain ATCC BAA-535 / M).